The chain runs to 490 residues: Calcium-dependent protein kinase 12 (490 aa).

The region spanning 22–280 is the Protein kinase domain; that stretch reads YFLGQVLGQG…AHQVLCHPWI (259 aa). ATP contacts are provided by residues 28–36 and Lys51; that span reads LGQGQFGTT. Asp146 serves as the catalytic Proton acceptor. The residue at position 186 (Ser186) is a Phosphoserine. The segment at 286–316 is autoinhibitory domain; the sequence is APDKPLDCAVVSRLKKFSAMNKLKKMALRVI. EF-hand domains follow at residues 323–358, 359–394, 395–430, and 434–464; these read EEIGGLKELFKMIDTDKSGTITFEELKDSMRRVGSE, LMESEIQELLRAADVDESGTIDYGEFLAATIHLNKL, EREENLVAAFSFFDKDASGYITIEELQQAWKEFGIN, and LDEMIKDIDQDNDGQIDYGEFVAMMRKGNGT. Ca(2+) is bound by residues Asp336, Asp338, Ser340, Thr342, Glu347, Asp372, Asp374, Ser376, Thr378, Glu383, Asp408, Asp410, Ser412, Tyr414, Glu419, Asp442, Asp444, Asp446, Gln448, and Glu453.

It belongs to the protein kinase superfamily. Ser/Thr protein kinase family. CDPK subfamily. Interacts weakly with DI19. As to expression, ubiquitously expressed.

It catalyses the reaction L-seryl-[protein] + ATP = O-phospho-L-seryl-[protein] + ADP + H(+). It carries out the reaction L-threonyl-[protein] + ATP = O-phospho-L-threonyl-[protein] + ADP + H(+). With respect to regulation, activated by calcium. Autophosphorylation may play an important role in the regulation of the kinase activity. In terms of biological role, may play a role in signal transduction pathways that involve calcium as a second messenger. This chain is Calcium-dependent protein kinase 12 (CPK12), found in Arabidopsis thaliana (Mouse-ear cress).